The chain runs to 208 residues: Small ribosomal subunit protein uS4 (208 aa).

The S4 RNA-binding domain occupies 98 to 160; sequence RRLDNVVYRM…SKNNVQIQRA (63 aa).

Belongs to the universal ribosomal protein uS4 family. Part of the 30S ribosomal subunit. Contacts protein S5. The interaction surface between S4 and S5 is involved in control of translational fidelity.

One of the primary rRNA binding proteins, it binds directly to 16S rRNA where it nucleates assembly of the body of the 30S subunit. In terms of biological role, with S5 and S12 plays an important role in translational accuracy. The protein is Small ribosomal subunit protein uS4 of Nautilia profundicola (strain ATCC BAA-1463 / DSM 18972 / AmH).